A 128-amino-acid chain; its full sequence is Phosphoribosyl-AMP cyclohydrolase (128 aa).

Asp-77 provides a ligand contact to Mg(2+). A Zn(2+)-binding site is contributed by Cys-78. Positions 79 and 81 each coordinate Mg(2+). Residues Cys-94 and Cys-101 each contribute to the Zn(2+) site.

Belongs to the PRA-CH family. As to quaternary structure, homodimer. Mg(2+) serves as cofactor. It depends on Zn(2+) as a cofactor.

It is found in the cytoplasm. It carries out the reaction 1-(5-phospho-beta-D-ribosyl)-5'-AMP + H2O = 1-(5-phospho-beta-D-ribosyl)-5-[(5-phospho-beta-D-ribosylamino)methylideneamino]imidazole-4-carboxamide. Its pathway is amino-acid biosynthesis; L-histidine biosynthesis; L-histidine from 5-phospho-alpha-D-ribose 1-diphosphate: step 3/9. Functionally, catalyzes the hydrolysis of the adenine ring of phosphoribosyl-AMP. The protein is Phosphoribosyl-AMP cyclohydrolase of Granulibacter bethesdensis (strain ATCC BAA-1260 / CGDNIH1).